The sequence spans 222 residues: Abasic site processing protein YedK (222 aa).

C2 (nucleophile) is an active-site residue. Thiazolidine linkage to a ring-opened DNA abasic site is present on C2. Residue E105 is part of the active site.

It belongs to the SOS response-associated peptidase family.

Formation and reversal of DNA-protein cross-link depends on DNA context. Catalyzes formation of the thiazolidine linkage in presence of abasic sites in single-stranded DNA. Mediates the reversal of the thiazolidine cross-link in presence of double stranded DNA. Sensor of abasic sites in single-stranded DNA (ssDNA) required to preserve genome integrity by promoting error-free repair of abasic sites. Recognizes and binds abasic sites in ssDNA at replication forks and chemically modifies the lesion by forming a covalent cross-link with DNA: forms a stable thiazolidine linkage between a ring-opened abasic site and the alpha-amino and sulfhydryl substituents of its N-terminal catalytic cysteine residue. The DNA-protein cross-link is then reversed: able to catalyze the reversal of the thiazolidine cross-link and cycle between a cross-link and a non-cross-linked state depending on DNA context: mediates self-reversal of the thiazolidine cross-link in double stranded DNA. May act as a protease: mediates autocatalytic processing of its N-terminal methionine in order to expose the catalytic cysteine. The chain is Abasic site processing protein YedK from Escherichia coli (strain K12).